A 315-amino-acid chain; its full sequence is Fucose-specific lectin (315 aa).

A run of 6 repeats spans residues 2-53 (STPG…KNVI), 54-103 (GNAK…GGAK), 104-155 (FQVA…LGGA), 156-207 (LPGT…TIFD), 208-260 (RAPP…ITPV), and 261-315 (IQGS…LPPA). The tract at residues 2 to 315 (STPGAQQVLF…QLGRSALPPA (314 aa)) is 6 X approximate tandem repeats. Alpha-L-fucose-binding residues include Arg-25, Glu-37, Trp-44, Arg-73, Glu-85, Trp-94, Gly-98, Arg-126, Glu-138, Trp-146, Thr-150, Arg-177, Gln-189, Trp-198, Arg-230, and Gln-242. Residues Cys-244, Asp-246, and His-252 each coordinate Zn(2+). Alpha-L-fucose is bound by residues Arg-282 and Glu-296.

Belongs to the fungal fucose-specific lectin family. In terms of assembly, homodimer.

Its function is as follows. Multispecific lectin that is able to recognize L-fucose in all possible linkages. These could be found not only in decomposed plant matter in soil, which is the natural environment for A.fumigatus, but also in various epitopes on human tissues. Mediates binding of A.fumigatus conidia to airway mucin in a fucose dependent manner. Stimulates IL-8 production by human bronchial cells in a dose-dependent manner, contributing to the inflammatory response observed upon the exposure of a patient to A.fumigatus, and thus might be an important virulence factor involved in an early stage of A.fumigatus infection. The chain is Fucose-specific lectin from Aspergillus fumigatus (strain ATCC MYA-4609 / CBS 101355 / FGSC A1100 / Af293) (Neosartorya fumigata).